A 465-amino-acid chain; its full sequence is MDDFPSLNVSDLESKLLDYNIRDYEVQNSKHKNNIAGNEKESIDQLSLLNQVCSLKNRKAIDSTKNSPLFYQNVLLSKLACSKILCHATKGGNIEVMGMLLGNVIGNTFVIFDCFELPVEGTETMVNAHMESYEYMVQFYHEMVERSYTRNEENLNIIGWYHSHPGYDCWLSNIDMQTQSLNQQHQDPYLAIVVDPHKSKNDQKVRIGSFRTYQDQNDDTNFYELNTTVFDSELNKLENPLSVKIPFNSIESRNLESNYLQKLSETVKQWRNFKIMEKIENTAHTEDTTTNKSISTPGRIIQTAHEFAFAATSNGNGSRVNIMRSNSVSSIGSSSDIEMEDRNCSAFDSVASSINTIADPSRTSSIHTQMNNQNNQQERNSPKRPHILPAIQSSRYGVIFEGKDRPENKNFNIRTASAQDAFESKCIDDFHESLKNDYLTQKEILLRLKLRQYYRLRMYRDMFSK.

The region spanning 74–216 (VLLSKLACSK…IGSFRTYQDQ (143 aa)) is the MPN domain. The Zn(2+) site is built by histidine 162, histidine 164, and aspartate 175. The short motif at 162–175 (HSHPGYDCWLSNID) is the JAMM motif element. Residues 364 to 386 (SSIHTQMNNQNNQQERNSPKRPH) are disordered.

The protein belongs to the peptidase M67A family. CSN5 subfamily. In terms of assembly, component of the COP9 signalosome (CSN) complex.

It is found in the cytoplasm. It localises to the nucleus. Functionally, catalytic Component of the COP9 signalosome (CSN) complex that acts as an regulator of the ubiquitin (Ubl) conjugation pathway by mediating the deneddylation of the cullin subunit of SCF-type E3 ubiquitin-protein ligase complexes. In Candida glabrata (strain ATCC 2001 / BCRC 20586 / JCM 3761 / NBRC 0622 / NRRL Y-65 / CBS 138) (Yeast), this protein is COP9 signalosome complex subunit 5 (RRI1).